The chain runs to 211 residues: Protein-L-isoaspartate O-methyltransferase (211 aa).

Residue Ser-62 is part of the active site.

This sequence belongs to the methyltransferase superfamily. L-isoaspartyl/D-aspartyl protein methyltransferase family.

Its subcellular location is the cytoplasm. The catalysed reaction is [protein]-L-isoaspartate + S-adenosyl-L-methionine = [protein]-L-isoaspartate alpha-methyl ester + S-adenosyl-L-homocysteine. Its function is as follows. Catalyzes the methyl esterification of L-isoaspartyl residues in peptides and proteins that result from spontaneous decomposition of normal L-aspartyl and L-asparaginyl residues. It plays a role in the repair and/or degradation of damaged proteins. This is Protein-L-isoaspartate O-methyltransferase from Shewanella pealeana (strain ATCC 700345 / ANG-SQ1).